The chain runs to 239 residues: Small ribosomal subunit protein uS3c (239 aa).

Positions 43-139 (IKNYIQKNRK…RFNISIEKVK (97 aa)) constitute a KH type-2 domain. Positions 50–74 (NRKKGSNRKIESDSSSEVITHNRKM) are disordered.

It belongs to the universal ribosomal protein uS3 family. As to quaternary structure, part of the 30S ribosomal subunit.

Its subcellular location is the plastid. The protein resides in the chloroplast. In Triticum aestivum (Wheat), this protein is Small ribosomal subunit protein uS3c (rps3).